We begin with the raw amino-acid sequence, 355 residues long: MALRLLKLAATSASARVVAAGAQRVRGIHSSVQCKLRYGMWHFLLGDKASKRLTERSRVITVDGNICTGKGKLAKEIAEKLGFKHFPEAGIHYPDSTTGDGKPLATDYNGNCSLEKFYDDPRSNDGNSYRLQSWLYSSRLLQYSDALEHLLTTGQGVVLERSIFSDFVFLEAMYNQGFIRKQCVDHYNEVKSVTICDYLPPHLVIYIDVPVPEVQRRIQKKGDPHEMKITSAYLQDIENAYKKTFLPEMSEKCEVLQYSAREAQDSKKVVEDIEYLKFDKGPWLKQDNRTLYHLRLLVQDKFEVLNYTSIPIFLPEVTIGAHQTDRVLHQFRELPGRKYSPGYNTEVGDKWIWLK.

Residues 1–35 (MALRLLKLAATSASARVVAAGAQRVRGIHSSVQCK) constitute a mitochondrion transit peptide. The residue at position 250 (S250) is a Phosphoserine; by PINK1. K285 carries the post-translational modification N6-succinyllysine.

The protein belongs to the complex I NDUFA10 subunit family. Complex I is composed of 45 different subunits. This a component of the hydrophobic protein fraction. FAD serves as cofactor. In terms of processing, phosphorylation at Ser-250 by PINK1 is required for the binding and/or reduction of the complex I substrate ubiquinone.

The protein localises to the mitochondrion matrix. Functionally, accessory subunit of the mitochondrial membrane respiratory chain NADH dehydrogenase (Complex I), that is believed not to be involved in catalysis. Complex I functions in the transfer of electrons from NADH to the respiratory chain. The immediate electron acceptor for the enzyme is believed to be ubiquinone. In Homo sapiens (Human), this protein is NADH dehydrogenase [ubiquinone] 1 alpha subcomplex subunit 10, mitochondrial (NDUFA10).